An 85-amino-acid polypeptide reads, in one-letter code: Toxin CsE8 (85 aa).

Residues methionine 1–serine 19 form the signal peptide. The LCN-type CS-alpha/beta domain maps to glutamate 20–glycine 83. 4 disulfides stabilise this stretch: cysteine 31/cysteine 82, cysteine 35/cysteine 58, cysteine 44/cysteine 63, and cysteine 48/cysteine 65. Cysteine 82 is modified (cysteine amide).

This sequence belongs to the long (4 C-C) scorpion toxin superfamily. Sodium channel inhibitor family. Beta subfamily. In terms of tissue distribution, expressed by the venom gland.

The protein localises to the secreted. Its function is as follows. Beta toxins bind voltage-independently at site-4 of sodium channels (Nav) and shift the voltage of activation toward more negative potentials thereby affecting sodium channel activation and promoting spontaneous and repetitive firing. This is Toxin CsE8 from Centruroides sculpturatus (Arizona bark scorpion).